Here is a 178-residue protein sequence, read N- to C-terminus: Interleukin-17B (178 aa).

The N-terminal stretch at 1–22 (MDWPHSLLFLLAISIFLGPSQP) is a signal peptide. Positions 21–44 (QPRNTKGKRKGQVRPGPLAPGPHQ) are disordered. N-linked (GlcNAc...) asparagine glycosylation occurs at asparagine 75. 2 disulfide bridges follow: cysteine 121-cysteine 176 and cysteine 126-cysteine 178.

The protein belongs to the IL-17 family.

It is found in the secreted. In terms of biological role, stimulates the release of tumor necrosis factor alpha and IL-1-beta from the monocytic cell line THP-1. This Mesocricetus auratus (Golden hamster) protein is Interleukin-17B (IL17B).